The chain runs to 270 residues: Putative phosphoenolpyruvate synthase regulatory protein (270 aa).

ADP is bound at residue G149–T156.

The protein belongs to the pyruvate, phosphate/water dikinase regulatory protein family. PSRP subfamily.

It carries out the reaction [pyruvate, water dikinase] + ADP = [pyruvate, water dikinase]-phosphate + AMP + H(+). It catalyses the reaction [pyruvate, water dikinase]-phosphate + phosphate + H(+) = [pyruvate, water dikinase] + diphosphate. Its function is as follows. Bifunctional serine/threonine kinase and phosphorylase involved in the regulation of the phosphoenolpyruvate synthase (PEPS) by catalyzing its phosphorylation/dephosphorylation. The protein is Putative phosphoenolpyruvate synthase regulatory protein of Pseudoalteromonas atlantica (strain T6c / ATCC BAA-1087).